The primary structure comprises 57 residues: Large ribosomal subunit protein bL32 (57 aa).

The segment covering 1–19 (MATPKRRMSRANTRSRRSQ) has biased composition (basic residues). Residues 1 to 21 (MATPKRRMSRANTRSRRSQWK) form a disordered region.

Belongs to the bacterial ribosomal protein bL32 family.

In Mycobacterium ulcerans (strain Agy99), this protein is Large ribosomal subunit protein bL32.